The sequence spans 334 residues: Ketol-acid reductoisomerase (NADP(+)) (334 aa).

The region spanning 1–181 is the KARI N-terminal Rossmann domain; sequence MTTVYYDQDV…GATRAGVIET (181 aa). NADP(+)-binding positions include 25 to 28, arginine 48, serine 52, and 82 to 85; these read YGSQ and DEIQ. The active site involves histidine 107. Glycine 133 is an NADP(+) binding site. The 146-residue stretch at 182–327 folds into the KARI C-terminal knotted domain; sequence TFKEETETDL…RELREMMPFI (146 aa). Residues aspartate 190, glutamate 194, glutamate 226, and glutamate 230 each coordinate Mg(2+). Serine 251 serves as a coordination point for substrate.

This sequence belongs to the ketol-acid reductoisomerase family. It depends on Mg(2+) as a cofactor.

The catalysed reaction is (2R)-2,3-dihydroxy-3-methylbutanoate + NADP(+) = (2S)-2-acetolactate + NADPH + H(+). The enzyme catalyses (2R,3R)-2,3-dihydroxy-3-methylpentanoate + NADP(+) = (S)-2-ethyl-2-hydroxy-3-oxobutanoate + NADPH + H(+). It functions in the pathway amino-acid biosynthesis; L-isoleucine biosynthesis; L-isoleucine from 2-oxobutanoate: step 2/4. The protein operates within amino-acid biosynthesis; L-valine biosynthesis; L-valine from pyruvate: step 2/4. Involved in the biosynthesis of branched-chain amino acids (BCAA). Catalyzes an alkyl-migration followed by a ketol-acid reduction of (S)-2-acetolactate (S2AL) to yield (R)-2,3-dihydroxy-isovalerate. In the isomerase reaction, S2AL is rearranged via a Mg-dependent methyl migration to produce 3-hydroxy-3-methyl-2-ketobutyrate (HMKB). In the reductase reaction, this 2-ketoacid undergoes a metal-dependent reduction by NADPH to yield (R)-2,3-dihydroxy-isovalerate. This is Ketol-acid reductoisomerase (NADP(+)) from Staphylococcus aureus (strain MSSA476).